A 714-amino-acid chain; its full sequence is Inducible lysine decarboxylase (714 aa).

An N6-(pyridoxal phosphate)lysine modification is found at Lys-367.

The protein belongs to the Orn/Lys/Arg decarboxylase class-I family. Homodecamer. Interacts with RavA. Requires pyridoxal 5'-phosphate as cofactor.

The protein localises to the cytoplasm. The catalysed reaction is L-lysine + H(+) = cadaverine + CO2. In Salmonella typhi, this protein is Inducible lysine decarboxylase (cadA).